Here is a 199-residue protein sequence, read N- to C-terminus: 7-methyl-GTP pyrophosphatase (199 aa).

Residue Asp-76 is the Proton acceptor of the active site.

Belongs to the Maf family. YceF subfamily. A divalent metal cation is required as a cofactor.

It localises to the cytoplasm. It catalyses the reaction N(7)-methyl-GTP + H2O = N(7)-methyl-GMP + diphosphate + H(+). Its function is as follows. Nucleoside triphosphate pyrophosphatase that hydrolyzes 7-methyl-GTP (m(7)GTP). May have a dual role in cell division arrest and in preventing the incorporation of modified nucleotides into cellular nucleic acids. The chain is 7-methyl-GTP pyrophosphatase from Rhizobium johnstonii (strain DSM 114642 / LMG 32736 / 3841) (Rhizobium leguminosarum bv. viciae).